The chain runs to 379 residues: Protein COS4 (379 aa).

4 helical membrane passes run 43 to 63 (IYKS…SVWW), 70 to 90 (IYPL…VLVI), 233 to 253 (ISNI…YVSR), and 255 to 275 (MCLL…VQGF).

Belongs to the DUP/COS family.

It localises to the membrane. The polypeptide is Protein COS4 (COS4) (Saccharomyces cerevisiae (strain ATCC 204508 / S288c) (Baker's yeast)).